We begin with the raw amino-acid sequence, 216 residues long: Germin-like protein 1-1 (216 aa).

A signal peptide spans 1-24 (MARVQLWVAAACAVVLALAAPSLA). Cysteines 34 and 49 form a disulfide. Residues N52 and N76 are each glycosylated (N-linked (GlcNAc...) asparagine). Residues 61–209 (AGLKNPGNTN…AFRVDVPQVD (149 aa)) enclose the Cupin type-1 domain. 4 residues coordinate Mn(2+): H109, H111, E116, and H155.

Belongs to the germin family. Oligomer (believed to be a pentamer but probably hexamer).

It localises to the secreted. It is found in the extracellular space. The protein localises to the apoplast. May play a role in plant defense. Probably has no oxalate oxidase activity even if the active site is conserved. The protein is Germin-like protein 1-1 (GER4) of Oryza sativa subsp. japonica (Rice).